Reading from the N-terminus, the 278-residue chain is MNNILFEEVLNVTDFTTSRQLTLWKREDLQSPQLDDVAEEVPVALVYNGISHVVMMASPKDLTHFAMGFSLSEGIIDSPREIYGMDVVPSCNGLEVQIDLSSRRFMGLKARRRALAGRTGCGVCGVEQLNDIGKPVQPLPFSQTFNLGNLDRALKHLNDFQPTGKLTGCTHAAAWVMPSGELAGGHEDVGRHVALDKLLGRRATEGEEWRQGAALVSSRASYEMVQKSAMCGVEILFAVSAATTLAVDVAERCNLTLVGFCKPGRATIYTHPQRLIAD.

The Cysteine persulfide intermediate role is filled by Cys-121. Mo-bis(molybdopterin guanine dinucleotide) is bound at residue 260 to 265 (FCKPGR).

Belongs to the FdhD family.

The protein localises to the cytoplasm. In terms of biological role, required for formate dehydrogenase (FDH) activity. Acts as a sulfur carrier protein that transfers sulfur from IscS to the molybdenum cofactor prior to its insertion into FDH. This chain is Sulfur carrier protein FdhD, found in Salmonella choleraesuis (strain SC-B67).